The following is a 513-amino-acid chain: Probable mannosyl-oligosaccharide alpha-1,2-mannosidase 1B (513 aa).

Positions 1–21 (MHLSSLSLSLTALAIVSPSAA) are cleaved as a signal peptide. 7 N-linked (GlcNAc...) asparagine glycosylation sites follow: Asn97, Asn117, Asn184, Asn251, Asn322, Asn348, and Asn368. The cysteines at positions 334 and 363 are disulfide-linked. Glu377 (proton donor) is an active-site residue. Residue Thr503 participates in Ca(2+) binding.

The protein belongs to the glycosyl hydrolase 47 family. In terms of assembly, monomer. The cofactor is Ca(2+). Mg(2+) serves as cofactor.

The protein resides in the cytoplasmic vesicle lumen. It catalyses the reaction N(4)-(alpha-D-Man-(1-&gt;2)-alpha-D-Man-(1-&gt;2)-alpha-D-Man-(1-&gt;3)-[alpha-D-Man-(1-&gt;2)-alpha-D-Man-(1-&gt;3)-[alpha-D-Man-(1-&gt;2)-alpha-D-Man-(1-&gt;6)]-alpha-D-Man-(1-&gt;6)]-beta-D-Man-(1-&gt;4)-beta-D-GlcNAc-(1-&gt;4)-beta-D-GlcNAc)-L-asparaginyl-[protein] (N-glucan mannose isomer 9A1,2,3B1,2,3) + 4 H2O = N(4)-(alpha-D-Man-(1-&gt;3)-[alpha-D-Man-(1-&gt;3)-[alpha-D-Man-(1-&gt;6)]-alpha-D-Man-(1-&gt;6)]-beta-D-Man-(1-&gt;4)-beta-D-GlcNAc-(1-&gt;4)-beta-D-GlcNAc)-L-asparaginyl-[protein] (N-glucan mannose isomer 5A1,2) + 4 beta-D-mannose. It carries out the reaction N(4)-(alpha-D-Man-(1-&gt;2)-alpha-D-Man-(1-&gt;2)-alpha-D-Man-(1-&gt;3)-[alpha-D-Man-(1-&gt;3)-[alpha-D-Man-(1-&gt;2)-alpha-D-Man-(1-&gt;6)]-alpha-D-Man-(1-&gt;6)]-beta-D-Man-(1-&gt;4)-beta-D-GlcNAc-(1-&gt;4)-beta-D-GlcNAc)-L-asparaginyl-[protein] (N-glucan mannose isomer 8A1,2,3B1,3) + 3 H2O = N(4)-(alpha-D-Man-(1-&gt;3)-[alpha-D-Man-(1-&gt;3)-[alpha-D-Man-(1-&gt;6)]-alpha-D-Man-(1-&gt;6)]-beta-D-Man-(1-&gt;4)-beta-D-GlcNAc-(1-&gt;4)-beta-D-GlcNAc)-L-asparaginyl-[protein] (N-glucan mannose isomer 5A1,2) + 3 beta-D-mannose. Its pathway is protein modification; protein glycosylation. Functionally, involved in the maturation of Asn-linked oligosaccharides. Progressively trims alpha-1,2-linked mannose residues from Man(9)GlcNAc(2) to produce Man(5)GlcNAc(2). The sequence is that of Probable mannosyl-oligosaccharide alpha-1,2-mannosidase 1B (mns1B) from Aspergillus niger (strain ATCC MYA-4892 / CBS 513.88 / FGSC A1513).